Consider the following 130-residue polypeptide: Flagellar assembly factor FliW (130 aa).

This sequence belongs to the FliW family. In terms of assembly, interacts with translational regulator CsrA and flagellin(s).

It localises to the cytoplasm. In terms of biological role, acts as an anti-CsrA protein, binds CsrA and prevents it from repressing translation of its target genes, one of which is flagellin. Binds to flagellin and participates in the assembly of the flagellum. The polypeptide is Flagellar assembly factor FliW (Borrelia hermsii (strain HS1 / DAH)).